Consider the following 427-residue polypeptide: 3-phosphoshikimate 1-carboxyvinyltransferase (427 aa).

3-phosphoshikimate-binding residues include Lys22, Ser23, and Arg27. Residue Lys22 participates in phosphoenolpyruvate binding. Positions 93 and 122 each coordinate phosphoenolpyruvate. 4 residues coordinate 3-phosphoshikimate: Ser167, Gln169, Asp315, and Lys342. Gln169 lines the phosphoenolpyruvate pocket. Asp315 functions as the Proton acceptor in the catalytic mechanism. Phosphoenolpyruvate is bound by residues Arg346 and Arg387.

This sequence belongs to the EPSP synthase family. As to quaternary structure, monomer.

Its subcellular location is the cytoplasm. It carries out the reaction 3-phosphoshikimate + phosphoenolpyruvate = 5-O-(1-carboxyvinyl)-3-phosphoshikimate + phosphate. The protein operates within metabolic intermediate biosynthesis; chorismate biosynthesis; chorismate from D-erythrose 4-phosphate and phosphoenolpyruvate: step 6/7. Catalyzes the transfer of the enolpyruvyl moiety of phosphoenolpyruvate (PEP) to the 5-hydroxyl of shikimate-3-phosphate (S3P) to produce enolpyruvyl shikimate-3-phosphate and inorganic phosphate. The chain is 3-phosphoshikimate 1-carboxyvinyltransferase from Thermus thermophilus (strain ATCC BAA-163 / DSM 7039 / HB27).